A 762-amino-acid chain; its full sequence is Catalase-peroxidase (762 aa).

The tract at residues Met-1–Thr-22 is disordered. The tryptophyl-tyrosyl-methioninium (Trp-Tyr) (with M-268) cross-link spans Trp-96–Tyr-242. The active-site Proton acceptor is His-97. Residues Tyr-242–Met-268 constitute a cross-link (tryptophyl-tyrosyl-methioninium (Tyr-Met) (with W-96)). A heme b-binding site is contributed by His-283.

The protein belongs to the peroxidase family. Peroxidase/catalase subfamily. As to quaternary structure, homodimer or homotetramer. Heme b is required as a cofactor. Formation of the three residue Trp-Tyr-Met cross-link is important for the catalase, but not the peroxidase activity of the enzyme.

It is found in the cytoplasm. It carries out the reaction H2O2 + AH2 = A + 2 H2O. It catalyses the reaction 2 H2O2 = O2 + 2 H2O. Bifunctional enzyme with both catalase and broad-spectrum peroxidase activity. The sequence is that of Catalase-peroxidase from Aspergillus niger (strain ATCC MYA-4892 / CBS 513.88 / FGSC A1513).